The sequence spans 1320 residues: Tetratricopeptide repeat protein 21A (1320 aa).

TPR repeat units lie at residues 4 to 38, 110 to 143, 146 to 180, 181 to 213, 215 to 247, 334 to 367, 502 to 534, 572 to 605, 728 to 761, 762 to 795, 797 to 828, 837 to 869, 889 to 922, 924 to 956, 957 to 990, 1028 to 1061, 1201 to 1234, 1236 to 1268, and 1270 to 1303; these read NDSSLMAGIIYYSQEKYFHHVQQAAAVGLEKFSND, GTALYYAGLFLWLIGRHDKAKEYIDRMLKISRGF, AYVLRGWVDLTSDKPHTAKKAIEYLEQGIQDTKDV, LGLMGKAMYFMMQQNYSEALEVVNQITVTSGSF, PALVLKMQLFLARQDWEQTVEMGHRILEKDESN, VHVATELGYLFILKNQVKEALLWYSEAMKLDKDG, IDPLYLMAQVRYYSELENAQSILQRCLELDPAS, PLYHLIKARALNKAGDYPEAIKTLKMVIKLPALK, PHTSLLLGDALMSILEPEKALEVYDEAYRQNPHD, ASLASRIGHAYVKAHQYTEAIEYYEAAQKINGQD, LCCDLGKLLLKLKKVNKAEKVLKQALEHDIVQ, VKCLLLLAKVYKSHKKEAVIETLNKALDLQSRI, ASICIQFAEHYLAEKEYDKAVQSYKDVFSYLPTD, KVMLELAQLYLLQGHLDLCEQHCAILLQTEQNH, ETASVLMADLMFRKQKHEAAINLYHQVLEKAPDN, PGFNYCRGIYCWHIGQPNEALKFLNKARKDSTWG, EKSWLLLADIYCQGSKFDLALELLRRCVQYNKSC, KAYEYMGFIMEKEQSYKDAVTNYKLAWKYSHHA, and PAIGFKLAFNYLKDKKFVEAIEICNDVLREHPDY.

This sequence belongs to the TTC21 family. In terms of assembly, interacts with IFT20. Interacts with IFT52. Interacts with IFT140. Interacts with CEP78; regulating IFT20 stability and localization. Strongly expressed in testis.

In terms of biological role, intraflagellar transport (IFT)-associated protein required for spermatogenesis. Required for sperm flagellar formation and intraflagellar transport. The polypeptide is Tetratricopeptide repeat protein 21A (Homo sapiens (Human)).